Here is a 542-residue protein sequence, read N- to C-terminus: Chaperonin GroEL (542 aa).

ATP contacts are provided by residues 29-32 (TLGP), 86-90 (DGTTT), G413, 476-478 (NAA), and D492.

Belongs to the chaperonin (HSP60) family. Forms a cylinder of 14 subunits composed of two heptameric rings stacked back-to-back. Interacts with the co-chaperonin GroES.

It localises to the cytoplasm. It catalyses the reaction ATP + H2O + a folded polypeptide = ADP + phosphate + an unfolded polypeptide.. Its function is as follows. Together with its co-chaperonin GroES, plays an essential role in assisting protein folding. The GroEL-GroES system forms a nano-cage that allows encapsulation of the non-native substrate proteins and provides a physical environment optimized to promote and accelerate protein folding. This Bacillus cytotoxicus (strain DSM 22905 / CIP 110041 / 391-98 / NVH 391-98) protein is Chaperonin GroEL.